A 261-amino-acid chain; its full sequence is Syntaxin-7 (261 aa).

At Ser2 the chain carries N-acetylserine. Topologically, residues 2 to 238 (SYTPGVGGDP…DYQRKSRKTL (237 aa)) are cytoplasmic. Thr4 carries the post-translational modification Phosphothreonine. Ser45 is modified (phosphoserine). The stretch at 47–69 (ELRQQLQQKQQYTNQLTKETDKY) forms a coiled coil. At Ser75 the chain carries Phosphoserine. Position 79 is a phosphothreonine (Thr79). Residues Ser125, Ser126, Ser129, and Ser205 each carry the phosphoserine modification. The interval 129–148 (SGSFPEDSSKERNLVSWESQ) is disordered. The region spanning 165 to 227 (LRLIHERESS…QQANQQLSRA (63 aa)) is the t-SNARE coiled-coil homology domain. A helical; Anchor for type IV membrane protein transmembrane segment spans residues 239-259 (CIIILILVIGVVIIGLIIWGL). Residues 260–261 (NR) lie on the Vesicular side of the membrane.

This sequence belongs to the syntaxin family. Forms a SNARE complex with VTI1B, STX8 and VAMP8 which functions in the homotypic fusion of late endosomes. Component of the SNARE complex composed of STX7, STX8, VAMP7 and VTI1B that is required for heterotypic fusion of late endosomes with lysosomes. Interacts with VPS11, VPS16 and VPS18. Interacts with VPS33A. Interacts with TPC1.

It is found in the early endosome membrane. Functionally, may be involved in protein trafficking from the plasma membrane to the early endosome (EE) as well as in homotypic fusion of endocytic organelles. Mediates the endocytic trafficking from early endosomes to late endosomes and lysosomes. This chain is Syntaxin-7 (STX7), found in Pongo abelii (Sumatran orangutan).